The chain runs to 144 residues: Endoribonuclease YbeY (144 aa).

Positions 105, 109, and 115 each coordinate Zn(2+).

This sequence belongs to the endoribonuclease YbeY family. The cofactor is Zn(2+).

Its subcellular location is the cytoplasm. Single strand-specific metallo-endoribonuclease involved in late-stage 70S ribosome quality control and in maturation of the 3' terminus of the 16S rRNA. The chain is Endoribonuclease YbeY from Chlorobium limicola (strain DSM 245 / NBRC 103803 / 6330).